The following is a 399-amino-acid chain: S-adenosylmethionine synthase (399 aa).

Histidine 16 lines the ATP pocket. A Mg(2+)-binding site is contributed by aspartate 18. K(+) is bound at residue glutamate 44. Residues glutamate 57 and glutamine 100 each coordinate L-methionine. The flexible loop stretch occupies residues 100–110; sequence QSPDIAQGVDD. ATP-binding positions include 174-176, 241-242, aspartate 250, 256-257, alanine 273, and lysine 277; these read DAK, RF, and RK. L-methionine is bound at residue aspartate 250. Position 281 (lysine 281) interacts with L-methionine.

It belongs to the AdoMet synthase family. Homotetramer; dimer of dimers. Mg(2+) is required as a cofactor. It depends on K(+) as a cofactor.

The protein localises to the cytoplasm. The catalysed reaction is L-methionine + ATP + H2O = S-adenosyl-L-methionine + phosphate + diphosphate. It functions in the pathway amino-acid biosynthesis; S-adenosyl-L-methionine biosynthesis; S-adenosyl-L-methionine from L-methionine: step 1/1. Functionally, catalyzes the formation of S-adenosylmethionine (AdoMet) from methionine and ATP. The overall synthetic reaction is composed of two sequential steps, AdoMet formation and the subsequent tripolyphosphate hydrolysis which occurs prior to release of AdoMet from the enzyme. The protein is S-adenosylmethionine synthase of Latilactobacillus sakei subsp. sakei (strain 23K) (Lactobacillus sakei subsp. sakei).